The primary structure comprises 346 residues: NADH-ubiquinone oxidoreductase chain 2 (346 aa).

11 helical membrane-spanning segments follow: residues 1–21 (MNPH…TITI), 25–45 (HWVL…PLIS), 60–80 (FLTQ…NAWA), 95–115 (CLLL…HFWF), 124–144 (LMTA…LLLM), 149–169 (LNPA…GWMG), 178–195 (ILAF…IILV), 200–219 (LALL…FMAL), 242–262 (ATLM…GFMP), 274–294 (EMTP…FFYL), and 326–346 (AILA…HAIV).

Belongs to the complex I subunit 2 family.

It localises to the mitochondrion inner membrane. It catalyses the reaction a ubiquinone + NADH + 5 H(+)(in) = a ubiquinol + NAD(+) + 4 H(+)(out). Functionally, core subunit of the mitochondrial membrane respiratory chain NADH dehydrogenase (Complex I) that is believed to belong to the minimal assembly required for catalysis. Complex I functions in the transfer of electrons from NADH to the respiratory chain. The immediate electron acceptor for the enzyme is believed to be ubiquinone. The sequence is that of NADH-ubiquinone oxidoreductase chain 2 (MT-ND2) from Anas acuta (Northern pintail).